The following is a 553-amino-acid chain: Phospholipase-B 81 (553 aa).

The first 35 residues, 1–35 (MVRFGSAASSDNRRRRCWSWYWGGLLLLWAVAETR), serve as a signal peptide directing secretion. N-linked (GlcNAc...) asparagine glycans are attached at residues Asn-69, Asn-313, Asn-416, and Asn-531.

Belongs to the phospholipase B-like family. As to expression, expressed by the venom gland.

The protein localises to the secreted. Its function is as follows. May cause hemolysis. This chain is Phospholipase-B 81, found in Drysdalia coronoides (White-lipped snake).